Reading from the N-terminus, the 312-residue chain is uncharacterized protein (312 aa).

Disordered stretches follow at residues Met1–Ala26 and Gly45–Gly106. Over residues Arg8–Asn17 the composition is skewed to basic residues. Residues Asn68–Arg77 show a composition bias toward basic and acidic residues. Residues Gly85–Leu103 show a composition bias toward polar residues.

This is an uncharacterized protein from Schizosaccharomyces pombe (strain 972 / ATCC 24843) (Fission yeast).